The following is a 528-amino-acid chain: Glucans biosynthesis protein G 2 (528 aa).

Positions M1–G44 are cleaved as a signal peptide.

Belongs to the OpgD/OpgG family.

The protein localises to the periplasm. It participates in glycan metabolism; osmoregulated periplasmic glucan (OPG) biosynthesis. Its function is as follows. Involved in the biosynthesis of osmoregulated periplasmic glucans (OPGs). The polypeptide is Glucans biosynthesis protein G 2 (opgG2) (Shewanella oneidensis (strain ATCC 700550 / JCM 31522 / CIP 106686 / LMG 19005 / NCIMB 14063 / MR-1)).